The following is a 379-amino-acid chain: Succinyl-diaminopimelate desuccinylase (379 aa).

Histidine 70 contributes to the Zn(2+) binding site. Aspartate 72 is an active-site residue. Residue aspartate 103 participates in Zn(2+) binding. Glutamate 137 functions as the Proton acceptor in the catalytic mechanism. Zn(2+) is bound by residues glutamate 138, glutamate 166, and histidine 352.

Belongs to the peptidase M20A family. DapE subfamily. In terms of assembly, homodimer. It depends on Zn(2+) as a cofactor. Co(2+) is required as a cofactor.

It catalyses the reaction N-succinyl-(2S,6S)-2,6-diaminopimelate + H2O = (2S,6S)-2,6-diaminopimelate + succinate. Its pathway is amino-acid biosynthesis; L-lysine biosynthesis via DAP pathway; LL-2,6-diaminopimelate from (S)-tetrahydrodipicolinate (succinylase route): step 3/3. Its function is as follows. Catalyzes the hydrolysis of N-succinyl-L,L-diaminopimelic acid (SDAP), forming succinate and LL-2,6-diaminopimelate (DAP), an intermediate involved in the bacterial biosynthesis of lysine and meso-diaminopimelic acid, an essential component of bacterial cell walls. This Burkholderia orbicola (strain MC0-3) protein is Succinyl-diaminopimelate desuccinylase.